Consider the following 327-residue polypeptide: Aldo-keto reductase family 7 member A3 (327 aa).

S2 bears the Phosphoserine mark. NADP(+)-binding residues include M13, R18, and D40. Y45 (proton donor) is an active-site residue. Position 109 (H109) interacts with citrate. NADP(+) contacts are provided by N140, N194, L196, G198, R204, and R218. Y228 and R231 together coordinate citrate. Residues S286, Q290, Q293, N294, and R327 each contribute to the NADP(+) site.

It belongs to the aldo/keto reductase family. Aldo/keto reductase 2 subfamily. As to quaternary structure, homodimer. Heterodimer with AKR7A2.

It is found in the cytoplasm. The enzyme catalyses a primary alcohol + NADP(+) = an aldehyde + NADPH + H(+). The catalysed reaction is aflatoxin B1 dialdehyde + NADPH + H(+) = aflatoxin B1 C(6a)-monoaldehyde + NADP(+). It catalyses the reaction aflatoxin B1 dialdehyde + NADPH + H(+) = aflatoxin B1 C(8)-monoaldehyde + NADP(+). It carries out the reaction aflatoxin B1 C(6a)-monoaldehyde + NADPH + 2 H(+) = aflatoxin B1 triol + NADP(+). Its activity is regulated as follows. Inhibited by citrate. Functionally, catalyzes the NADPH-dependent reduction of various carbonyl-containing compounds, including aldehydes, ketones, and toxic products from cellular metabolism or environmental exposure. Can reduce the dialdehyde form of aflatoxin B1 (AFB1) into alcohol derivatives, via monoaldehydes intermediates, thus preventing the formation of protein adducts that contribute to AFB1-induced toxicity. The sequence is that of Aldo-keto reductase family 7 member A3 from Rattus norvegicus (Rat).